We begin with the raw amino-acid sequence, 712 residues long: Dynamin-1-like protein drp-1 (712 aa).

In terms of domain architecture, Dynamin-type G spans 24–304 (QIQLPQIVVV…LMHHIRNCLP (281 aa)). A G1 motif region spans residues 34–41 (GSQSAGKS). A G2 motif region spans residues 60–62 (VTR). The interval 148–151 (DLPG) is G3 motif. Positions 217–220 (TKLD) are G4 motif. Positions 247-250 (VNRS) are G5 motif. Residues 280-502 (SRNGTPYLAK…LAYINTKHPE (223 aa)) are interaction with caspase ced-9. The tract at residues 523–542 (GRSRNRHASTGERAVSAHGE) is disordered. Residues 620–711 (VAIIERLIRN…IISEVRETQV (92 aa)) enclose the GED domain.

Belongs to the TRAFAC class dynamin-like GTPase superfamily. Dynamin/Fzo/YdjA family. Interacts (via residues 280-502) with caspase ced-9; the interaction is enhanced by GTP rather than GDP; the interaction is probably direct and may occur at the mitochondrion. As to expression, highly expressed in neurons, in intestinal cells and in the body wall, pharyngeal, and vulval muscles.

The protein resides in the mitochondrion. It is found in the mitochondrion outer membrane. Its subcellular location is the cytoplasm. It localises to the cytosol. The catalysed reaction is GTP + H2O = GDP + phosphate + H(+). With respect to regulation, GTPase activity is increased by binding to phospholipid membranes. Functions in mitochondrial division. Functions in peroxisomal division. Mediates membrane fission, perhaps mainly of the mitochondrial outer membrane. Mitochondrial fission may be promoted by recruitment to mitochondrial membranes via the egl-1/ced-9 complex. Involved in the coordination of mitochondrial division with autophagy in response to acute heat stress during larval development. Plays a role in apoptosis by promoting mitochondrial elimination and cell-death execution, acting downstream of caspase ced-3, and perhaps independently of FIS1-related protein fis-2, caspase ced-9 and apoptosis-inducing factor AIFM/wah-1. Role in promoting apoptosis dependent upon cleavage of drp-1 by ced-3. Involved in negatively modulating longevity in concert with the Insulin/IGF-1-like signaling (IIS) mediated pathway. The polypeptide is Dynamin-1-like protein drp-1 (Caenorhabditis elegans).